Reading from the N-terminus, the 496-residue chain is MEFSVKSGNPEKQRSACVVVGVFDRRKLSSAARVLDKASGGALSTILRRGDMDGEKGQTLWLYNLPNTLCERVLLVGCGKERDFDEPAYRSVIATVARTVNKSGAVEAVNYLTDLPVKGRDTLWKISQAVTITQDSLYSFQQLKSKKEDTQRPLKRIILSVPSRADLLPGEDAVRVATAISVGTKLTRDLANLPGNICNPTYLAEQALQLKKTYKGLKVEILEEADMEKLGMGALLSVSRGSEQPAKLITLEYRGGRKDAKPVVLVGKGITFDTGGISLKPGAEMDEMKFDMCGAASVLGVMKAVAEMMLPINLVGVVAAAENMPDGKATRPGDVVTSMSGQTIEILNTDAEGRLVLCDALSYVERFDPDVVIDIATLTGACIIALGHQATGLLSNHSPLANDLLGAGKQSYDRAWELPLWDEYQEQLKSNFADMANIGGRPAGTITAACFLSRFTKKYKWAHLDIAGVAWKSGKEKGATGRPVPLLMQYLLNKAS.

Mn(2+) contacts are provided by Lys268 and Asp273. The active site involves Lys280. Asp291, Asp350, and Glu352 together coordinate Mn(2+). The active site involves Arg354.

This sequence belongs to the peptidase M17 family. The cofactor is Mn(2+).

It localises to the cytoplasm. It catalyses the reaction Release of an N-terminal amino acid, Xaa-|-Yaa-, in which Xaa is preferably Leu, but may be other amino acids including Pro although not Arg or Lys, and Yaa may be Pro. Amino acid amides and methyl esters are also readily hydrolyzed, but rates on arylamides are exceedingly low.. The enzyme catalyses Release of an N-terminal amino acid, preferentially leucine, but not glutamic or aspartic acids.. Functionally, presumably involved in the processing and regular turnover of intracellular proteins. Catalyzes the removal of unsubstituted N-terminal amino acids from various peptides. In Thioalkalivibrio sulfidiphilus (strain HL-EbGR7), this protein is Probable cytosol aminopeptidase.